The following is a 237-amino-acid chain: Regulator of G-protein signaling 9-binding protein (237 aa).

Topologically, residues 1–212 (MAREECKALL…ERAGPCDPSK (212 aa)) are cytoplasmic. Residues 30-54 (SADTQDLREELQKTRQKARELAVAT) are a coiled coil. The interval 153-202 (EVLQVGEMIDDMEMKVNVPRWTVQARQAAGAELLSGASAGASSAGGISVE) is SNARE-like. The helical; Anchor for type IV membrane protein transmembrane segment at 213–233 (ALAATVFSAVLLVAVALALCV) threads the bilayer. At 234 to 237 (AKLS) the chain is on the extracellular side.

The protein belongs to the RGS7BP/RGS9BP family. In terms of assembly, specifically interacts with isoform RGS9-1 of RGS9. Interaction is decreased when RGS9-1 is phosphorylated at 'Ser-475'. Component of the RGS9-1-Gbeta5 complex composed of RGS9-1, Gbeta5 (GNB5) and RGS9BP. As to expression, predominantly expressed in photoreceptors of the retina. Weakly expressed in other areas of the central nervous system.

It localises to the membrane. Functionally, regulator of G protein-coupled receptor (GPCR) signaling in phototransduction. Participates in the recovery phase of visual transduction via its interaction with RGS9-1 isoform. Acts as a membrane-anchor that mediates the targeting of RGS9-1 to the photoreceptor outer segment, where phototransduction takes place. Enhances the ability of RGS9-1 to stimulate G protein GTPase activity, allowing the visual signal to be terminated on the physiologically time scale. It also controls the proteolytic stability of RGS9-1, probably by protecting it from degradation. This Mus musculus (Mouse) protein is Regulator of G-protein signaling 9-binding protein (Rgs9bp).